A 540-amino-acid chain; its full sequence is 2-isopropylmalate synthase (540 aa).

The Pyruvate carboxyltransferase domain occupies Val-8–Glu-269. Positions 17, 208, 210, and 244 each coordinate Mn(2+). A regulatory domain region spans residues Gln-408–Leu-540.

Belongs to the alpha-IPM synthase/homocitrate synthase family. LeuA type 1 subfamily. In terms of assembly, homodimer. Mn(2+) is required as a cofactor.

It localises to the cytoplasm. The enzyme catalyses 3-methyl-2-oxobutanoate + acetyl-CoA + H2O = (2S)-2-isopropylmalate + CoA + H(+). Its pathway is amino-acid biosynthesis; L-leucine biosynthesis; L-leucine from 3-methyl-2-oxobutanoate: step 1/4. Its function is as follows. Catalyzes the condensation of the acetyl group of acetyl-CoA with 3-methyl-2-oxobutanoate (2-ketoisovalerate) to form 3-carboxy-3-hydroxy-4-methylpentanoate (2-isopropylmalate). The sequence is that of 2-isopropylmalate synthase from Synechococcus sp. (strain WH7803).